The following is a 301-amino-acid chain: Glutamine amidotransferase-like protein GlxB (301 aa).

C2 is a catalytic residue. The Glutamine amidotransferase type-2 domain occupies 2–298 (CGIVGLFLKD…PATVYFWDHQ (297 aa)).

The chain is Glutamine amidotransferase-like protein GlxB (glxB) from Rhizobium meliloti (strain 1021) (Ensifer meliloti).